The chain runs to 353 residues: Protein U67 (353 aa).

The protein belongs to the herpesviridae UL95 family.

This chain is Protein U67 (U67), found in Human herpesvirus 6A (strain Uganda-1102) (HHV-6 variant A).